The chain runs to 125 residues: UPF0102 protein mlr4633 (125 aa).

It belongs to the UPF0102 family.

This Mesorhizobium japonicum (strain LMG 29417 / CECT 9101 / MAFF 303099) (Mesorhizobium loti (strain MAFF 303099)) protein is UPF0102 protein mlr4633.